A 105-amino-acid chain; its full sequence is Phosphoribosyl-AMP cyclohydrolase (105 aa).

Asp72 contributes to the Mg(2+) binding site. Cys73 is a Zn(2+) binding site. The Mg(2+) site is built by Asp74 and Asp76. Residues Cys89 and Cys96 each coordinate Zn(2+).

Belongs to the PRA-CH family. As to quaternary structure, homodimer. It depends on Mg(2+) as a cofactor. Zn(2+) serves as cofactor.

It localises to the cytoplasm. It catalyses the reaction 1-(5-phospho-beta-D-ribosyl)-5'-AMP + H2O = 1-(5-phospho-beta-D-ribosyl)-5-[(5-phospho-beta-D-ribosylamino)methylideneamino]imidazole-4-carboxamide. The protein operates within amino-acid biosynthesis; L-histidine biosynthesis; L-histidine from 5-phospho-alpha-D-ribose 1-diphosphate: step 3/9. In terms of biological role, catalyzes the hydrolysis of the adenine ring of phosphoribosyl-AMP. This chain is Phosphoribosyl-AMP cyclohydrolase, found in Listeria monocytogenes serotype 4b (strain CLIP80459).